A 334-amino-acid polypeptide reads, in one-letter code: Cytochrome c biogenesis protein CcsA (334 aa).

8 helical membrane-spanning segments follow: residues 12–32 (NTAF…VVFP), 35–55 (WLVQ…TALL), 67–87 (ISNL…VHFI), 96–116 (FVGA…ALTL), 141–161 (VMMV…AFLF), 242–262 (IIGL…VWAN), 277–297 (WALI…TKGW), and 303–323 (AILA…VNLL).

Belongs to the CcmF/CycK/Ccl1/NrfE/CcsA family. In terms of assembly, may interact with ccs1.

The protein resides in the cellular thylakoid membrane. Required during biogenesis of c-type cytochromes (cytochrome c6 and cytochrome f) at the step of heme attachment. The protein is Cytochrome c biogenesis protein CcsA of Synechocystis sp. (strain ATCC 27184 / PCC 6803 / Kazusa).